The following is a 313-amino-acid chain: Type I restriction enzyme EcoprrI endonuclease subunit (313 aa).

Belongs to the HsdR family. In terms of assembly, the type I restriction/modification system is composed of three polypeptides R, M and S; the restriction enzyme has stoichiometry R(2)M(2)S(1) while the methyltransferase is M(2)S(1).

It catalyses the reaction Endonucleolytic cleavage of DNA to give random double-stranded fragments with terminal 5'-phosphates, ATP is simultaneously hydrolyzed.. Functionally, the subtype C restriction (R) subunit of a type I restriction enzyme that recognizes 5'-CCAN(7)RTGC-3' and cleaves a random distance away. The R subunit is required for both endonuclease and ATPase activities but not for modification. Cleaves only non-methylated DNA, hemi-methylated and fully methylated DNA are not substrates. After locating a non-methylated recognition site, the enzyme complex serves as a molecular motor that translocates DNA in an ATP-dependent manner until a collision occurs that triggers cleavage. The prr locus restricts phage T4 mutants lacking polynucleotide kinase or RNA ligase; T4 mutants lacking these genes manifest a T4-induced anticodon nuclease (ACNase). This is a putative 'masking-agent' for the ACNase encoded by prrC. It is thought that Stp and other T4-encoded ACNase factors counteract the masking agents, thus activating the latent ACNase. The chain is Type I restriction enzyme EcoprrI endonuclease subunit from Escherichia coli.